The chain runs to 233 residues: MEGGAYGAGKAGGAFDPYTLVRQPHTILRVVSWLFSIVVFGSIVNEGYLNSASEGEEFCIYNRNPNACSYGVAVGVLAFLTCLLYLALDVYFPQISSVKDRKKAVLSDIGVSAFWAFLWFVGFCYLANQWQVSKPKDNPLNEGTDAARAAIAFSFFSIFTWAGQAVLAFQRYQIGADSALFSQDYMDPSQDSSMPYAPYVEPTGPDPAGMGGTYQQPANTFDTEPQGYQSQGY.

The residue at position 1 (Met-1) is an N-acetylmethionine. Over 1–23 (MEGGAYGAGKAGGAFDPYTLVRQ) the chain is Cytoplasmic. The MARVEL domain occupies 20–173 (LVRQPHTILR…QAVLAFQRYQ (154 aa)). Residues 24–44 (PHTILRVVSWLFSIVVFGSIV) form a helical membrane-spanning segment. Over 45–71 (NEGYLNSASEGEEFCIYNRNPNACSYG) the chain is Lumenal. The helical transmembrane segment at 72–92 (VAVGVLAFLTCLLYLALDVYF) threads the bilayer. Topologically, residues 93–103 (PQISSVKDRKK) are cytoplasmic. Residues 104–124 (AVLSDIGVSAFWAFLWFVGFC) traverse the membrane as a helical segment. Over 125–148 (YLANQWQVSKPKDNPLNEGTDAAR) the chain is Lumenal. The chain crosses the membrane as a helical span at residues 149 to 169 (AAIAFSFFSIFTWAGQAVLAF). The Cytoplasmic portion of the chain corresponds to 170-233 (QRYQIGADSA…EPQGYQSQGY (64 aa)). The segment at 194-233 (MPYAPYVEPTGPDPAGMGGTYQQPANTFDTEPQGYQSQGY) is disordered. Residues 213–233 (TYQQPANTFDTEPQGYQSQGY) show a composition bias toward polar residues.

The protein belongs to the synaptogyrin family.

It is found in the cytoplasmic vesicle. The protein localises to the secretory vesicle. It localises to the synaptic vesicle membrane. The protein resides in the melanosome. In terms of biological role, may play a role in regulated exocytosis. Modulates the localization of synaptophysin/SYP into synaptic-like microvesicles and may therefore play a role in synaptic-like microvesicle formation and/or maturation. Involved in the regulation of short-term and long-term synaptic plasticity. This chain is Synaptogyrin-1, found in Homo sapiens (Human).